A 316-amino-acid polypeptide reads, in one-letter code: Transcription initiation factor IIB (316 aa).

The segment at 11–42 adopts a TFIIB-type zinc-finger fold; it reads PKVTCPNHPDALLVEDYRAGDMICSECGLVVG. Residues Cys15, His18, Cys34, and Cys37 each contribute to the Zn(2+) site. 2 repeat units span residues 124-200 and 218-294.

The protein belongs to the TFIIB family.

It is found in the nucleus. Its subcellular location is the chromosome. It carries out the reaction L-lysyl-[protein] + acetyl-CoA = N(6)-acetyl-L-lysyl-[protein] + CoA + H(+). Its function is as follows. General transcription factor that plays a role in transcription initiation by RNA polymerase II (Pol II). Involved in the pre-initiation complex (PIC) formation and Pol II recruitment at promoter DNA. Together with the TATA box-bound TBP forms the core initiation complex and provides a bridge between TBP and the Pol II-TFIIF complex. Released from the PIC early following the onset of transcription during the initiation and elongation transition and reassociates with TBP during the next transcription cycle. Associates with chromatin to core promoter-specific regions. Binds to two distinct DNA core promoter consensus sequence elements in a TBP-independent manner; these IIB-recognition elements (BREs) are localized immediately upstream (BREu), 5'-[GC][GC][GA]CGCC-3', and downstream (BREd), 5'-[GA]T[TGA][TG][GT][TG][TG]-3', of the TATA box element. Modulates transcription start site selection. Also exhibits autoacetyltransferase activity that contributes to the activated transcription. The protein is Transcription initiation factor IIB of Xenopus laevis (African clawed frog).